The primary structure comprises 343 residues: N-acetyl-gamma-glutamyl-phosphate reductase (343 aa).

Residue cysteine 149 is part of the active site.

It belongs to the NAGSA dehydrogenase family. Type 1 subfamily.

It is found in the cytoplasm. The catalysed reaction is N-acetyl-L-glutamate 5-semialdehyde + phosphate + NADP(+) = N-acetyl-L-glutamyl 5-phosphate + NADPH + H(+). The protein operates within amino-acid biosynthesis; L-arginine biosynthesis; N(2)-acetyl-L-ornithine from L-glutamate: step 3/4. Catalyzes the NADPH-dependent reduction of N-acetyl-5-glutamyl phosphate to yield N-acetyl-L-glutamate 5-semialdehyde. The polypeptide is N-acetyl-gamma-glutamyl-phosphate reductase (Methanococcus maripaludis (strain C7 / ATCC BAA-1331)).